The chain runs to 207 residues: Large ribosomal subunit protein uL4 (207 aa).

A disordered region spans residues 56–75 (EVSGTTKKPFKQKGTGNARQ).

This sequence belongs to the universal ribosomal protein uL4 family. In terms of assembly, part of the 50S ribosomal subunit.

In terms of biological role, one of the primary rRNA binding proteins, this protein initially binds near the 5'-end of the 23S rRNA. It is important during the early stages of 50S assembly. It makes multiple contacts with different domains of the 23S rRNA in the assembled 50S subunit and ribosome. Forms part of the polypeptide exit tunnel. The polypeptide is Large ribosomal subunit protein uL4 (Rickettsia prowazekii (strain Madrid E)).